Consider the following 526-residue polypeptide: NAD(P)H-quinone oxidoreductase chain 4 2 (526 aa).

14 helical membrane passes run 6 to 26 (FPWLSTIILFPIIAALFLPLI), 36 to 56 (WYALTIGLIDFVIIVTAFYTG), 91 to 111 (LILLTGFITTLAILAAWPVSF), 113 to 133 (PKLFYFLMLLMYGGQIAVFAV), 137 to 157 (LLFFFTWELELVPVYLILSIW), 169 to 189 (FILYTAGGSLFILIAALTMAF), 212 to 232 (LLLYGGLLIAYGVKLPIFPLH), 243 to 263 (TAPAHMLLAGILLKMGGYALL), 275 to 295 (ALFGPVLVILGVVNIVYAALT), 306 to 326 (IAYSSISHMGFVLIGMASFTD), 332 to 352 (AMLQMISHGLIGASLFFMVGA), 375 to 397 (IFAMWTTCSMASLALPGMSGFVA), 417 to 437 (VIIVFLAAVGVILTPIYLLSM), and 464 to 484 (VFVIACLLIPIIGIGLYPKAV).

The protein belongs to the complex I subunit 4 family.

The protein localises to the cellular thylakoid membrane. It catalyses the reaction a plastoquinone + NADH + (n+1) H(+)(in) = a plastoquinol + NAD(+) + n H(+)(out). The catalysed reaction is a plastoquinone + NADPH + (n+1) H(+)(in) = a plastoquinol + NADP(+) + n H(+)(out). Its function is as follows. NDH-1 shuttles electrons from NAD(P)H, via FMN and iron-sulfur (Fe-S) centers, to quinones in the respiratory chain. The immediate electron acceptor for the enzyme in this species is believed to be plastoquinone. Couples the redox reaction to proton translocation (for every two electrons transferred, four hydrogen ions are translocated across the cytoplasmic membrane), and thus conserves the redox energy in a proton gradient. In Picosynechococcus sp. (strain ATCC 27264 / PCC 7002 / PR-6) (Agmenellum quadruplicatum), this protein is NAD(P)H-quinone oxidoreductase chain 4 2.